The primary structure comprises 264 residues: Hydroxyethylthiazole kinase (264 aa).

Position 43 (M43) interacts with substrate. Residues R119 and T165 each coordinate ATP. Substrate is bound at residue G192.

It belongs to the Thz kinase family. Requires Mg(2+) as cofactor.

It catalyses the reaction 5-(2-hydroxyethyl)-4-methylthiazole + ATP = 4-methyl-5-(2-phosphooxyethyl)-thiazole + ADP + H(+). The protein operates within cofactor biosynthesis; thiamine diphosphate biosynthesis; 4-methyl-5-(2-phosphoethyl)-thiazole from 5-(2-hydroxyethyl)-4-methylthiazole: step 1/1. Functionally, catalyzes the phosphorylation of the hydroxyl group of 4-methyl-5-beta-hydroxyethylthiazole (THZ). The chain is Hydroxyethylthiazole kinase from Anoxybacillus flavithermus (strain DSM 21510 / WK1).